A 95-amino-acid polypeptide reads, in one-letter code: Pyrimidine/purine nucleoside phosphorylase (95 aa).

Belongs to the nucleoside phosphorylase PpnP family.

The enzyme catalyses a purine D-ribonucleoside + phosphate = a purine nucleobase + alpha-D-ribose 1-phosphate. It catalyses the reaction adenosine + phosphate = alpha-D-ribose 1-phosphate + adenine. It carries out the reaction cytidine + phosphate = cytosine + alpha-D-ribose 1-phosphate. The catalysed reaction is guanosine + phosphate = alpha-D-ribose 1-phosphate + guanine. The enzyme catalyses inosine + phosphate = alpha-D-ribose 1-phosphate + hypoxanthine. It catalyses the reaction thymidine + phosphate = 2-deoxy-alpha-D-ribose 1-phosphate + thymine. It carries out the reaction uridine + phosphate = alpha-D-ribose 1-phosphate + uracil. The catalysed reaction is xanthosine + phosphate = alpha-D-ribose 1-phosphate + xanthine. Catalyzes the phosphorolysis of diverse nucleosides, yielding D-ribose 1-phosphate and the respective free bases. Can use uridine, adenosine, guanosine, cytidine, thymidine, inosine and xanthosine as substrates. Also catalyzes the reverse reactions. This chain is Pyrimidine/purine nucleoside phosphorylase, found in Yersinia enterocolitica serotype O:8 / biotype 1B (strain NCTC 13174 / 8081).